A 364-amino-acid chain; its full sequence is tRNA(Met) cytidine acetate ligase (364 aa).

ATP contacts are provided by residues 7 to 20 (IAEF…HKYL), glycine 96, asparagine 152, and arginine 175.

It belongs to the TmcAL family.

The protein localises to the cytoplasm. The enzyme catalyses cytidine(34) in elongator tRNA(Met) + acetate + ATP = N(4)-acetylcytidine(34) in elongator tRNA(Met) + AMP + diphosphate. Its function is as follows. Catalyzes the formation of N(4)-acetylcytidine (ac(4)C) at the wobble position of elongator tRNA(Met), using acetate and ATP as substrates. First activates an acetate ion to form acetyladenylate (Ac-AMP) and then transfers the acetyl group to tRNA to form ac(4)C34. The chain is tRNA(Met) cytidine acetate ligase from Streptococcus sanguinis (strain SK36).